Consider the following 74-residue polypeptide: U2-sicaritoxin-Sdo1a (74 aa).

Positions 1–20 (MKLSFCFFLCAIVLFSFAEA) are cleaved as a signal peptide. A propeptide spanning residues 21-39 (RINPNQLKRLRELVRDDEP) is cleaved from the precursor. Intrachain disulfides connect C42/C59, C49/C62, and C58/C71.

Expressed by the venom gland.

The protein localises to the secreted. This is U2-sicaritoxin-Sdo1a from Hexophthalma dolichocephala (Afrotropical spider).